We begin with the raw amino-acid sequence, 467 residues long: UDP-N-acetylmuramate--L-alanine ligase (467 aa).

An ATP-binding site is contributed by 114-120 (GTHGKTT).

Belongs to the MurCDEF family.

It is found in the cytoplasm. The catalysed reaction is UDP-N-acetyl-alpha-D-muramate + L-alanine + ATP = UDP-N-acetyl-alpha-D-muramoyl-L-alanine + ADP + phosphate + H(+). It functions in the pathway cell wall biogenesis; peptidoglycan biosynthesis. Its function is as follows. Cell wall formation. In Bradyrhizobium sp. (strain ORS 278), this protein is UDP-N-acetylmuramate--L-alanine ligase.